Reading from the N-terminus, the 342-residue chain is Protein FinQ (342 aa).

The H-T-H motif DNA-binding region spans 208 to 227 (RDREFNLLNAQISMVLYICS).

Transcriptional inhibitor of the F plasmid transfer genes. FinQ may regulate a gene or genes encoded on the IncI plasmids, and coincidentally may inhibit F transfer when coresident. The protein is Protein FinQ (finQ) of Escherichia coli.